The following is a 148-amino-acid chain: MKYQKLENQEAHWKWLYLIKKHREGENITRYEERSLSEDKVKQLLSQQNQPQAIENWIKAHLSPHLMIKLDQAIRARRKRFFNGEKQSTKKKSIDLEYAVWLRLSRYSRKMKMTLSETITYMIDERESKAQYEHQISAMKAGLKDLLK.

The protein belongs to the MatP family. In terms of assembly, homodimer.

It is found in the cytoplasm. Functionally, required for spatial organization of the terminus region of the chromosome (Ter macrodomain) during the cell cycle. Prevents early segregation of duplicated Ter macrodomains during cell division. Binds specifically to matS, which is a 13 bp signature motif repeated within the Ter macrodomain. This is Macrodomain Ter protein from Pasteurella multocida (strain Pm70).